The primary structure comprises 360 residues: Peptide chain release factor 1 (360 aa).

At Gln235 the chain carries N5-methylglutamine. Over residues 285-295 (AQQASEASTRK) the composition is skewed to polar residues. Residues 285–305 (AQQASEASTRKSLIGSGDRSD) form a disordered region.

This sequence belongs to the prokaryotic/mitochondrial release factor family. Methylated by PrmC. Methylation increases the termination efficiency of RF1.

It localises to the cytoplasm. Its function is as follows. Peptide chain release factor 1 directs the termination of translation in response to the peptide chain termination codons UAG and UAA. In Thiobacillus denitrificans (strain ATCC 25259 / T1), this protein is Peptide chain release factor 1.